The chain runs to 302 residues: GTPase Era (302 aa).

Positions 10–178 constitute an Era-type G domain; the sequence is RCGYVAIVGR…EAQIAKHLPE (169 aa). The G1 stretch occupies residues 18–25; it reads GRPNVGKS. 18 to 25 is a GTP binding site; the sequence is GRPNVGKS. Residues 44 to 48 form a G2 region; sequence QTTRH. Residues 65–68 are G3; that stretch reads DTPG. Residues 65 to 69 and 127 to 130 each bind GTP; these read DTPGM and NKTD. A G4 region spans residues 127-130; sequence NKTD. Residues 157 to 159 form a G5 region; sequence ISA. The region spanning 201–285 is the KH type-2 domain; the sequence is VREKIMRQLG…MLNLWVKVKG (85 aa).

Belongs to the TRAFAC class TrmE-Era-EngA-EngB-Septin-like GTPase superfamily. Era GTPase family. As to quaternary structure, monomer.

It is found in the cytoplasm. The protein localises to the cell inner membrane. In terms of biological role, an essential GTPase that binds both GDP and GTP, with rapid nucleotide exchange. Plays a role in 16S rRNA processing and 30S ribosomal subunit biogenesis and possibly also in cell cycle regulation and energy metabolism. This Pseudomonas putida (strain ATCC 47054 / DSM 6125 / CFBP 8728 / NCIMB 11950 / KT2440) protein is GTPase Era.